A 473-amino-acid polypeptide reads, in one-letter code: MNTQPHHSSPDSPQDGGWFPISIRLSGARVLLVGGGEIAVNKGRLLLDHGARIDVLAEKLHPAVQGWVENGRVRHVGERADEAVLRRLLPGCRLVYAATDSRDTNRQVAALADELNIPVCAVDDPGPSSFITPAQVRRGMVRVAVSTGGAAPVLARRLREQIETLLPEGTGRLATYMQSRRAFVSGRYPNVQDRKRIWEDFLDGPGAEAARSGDESRADARLEVLLDGERKSGEVWLVGAGPGDPDLLTLKALHLMQNADSVLYDNLVSPALLDMVRRDAELVFVGKQRDRHALPQDEINREMVRRAQGGERVLRLKGGDPFIFGRGGEEIEALVEAGVAFRLVPGISAANGCAAYSGIPLTHRDCAQACLFVTGHAKADGVLDLPWDDMADRRQTVVIYMGISTLPQLAAGLLGKGLPADWPVAIVERGTQPRQRVFTGTLSTIAQQAAEAQVKSPALVIVGQVVRHRVVSP.

The interval 1–222 is precorrin-2 dehydrogenase /sirohydrochlorin ferrochelatase; it reads MNTQPHHSSP…GDESRADARL (222 aa). Residues 37-38 and 58-59 contribute to the NAD(+) site; these read EI and EK. The segment at 233–473 is uroporphyrinogen-III C-methyltransferase; it reads GEVWLVGAGP…QVVRHRVVSP (241 aa). Pro-242 lines the S-adenosyl-L-methionine pocket. Asp-265 acts as the Proton acceptor in catalysis. The active-site Proton donor is the Lys-287. S-adenosyl-L-methionine is bound by residues 318–320, Ile-323, 348–349, Met-401, and Gly-430; these read GGD and SA.

It in the N-terminal section; belongs to the precorrin-2 dehydrogenase / sirohydrochlorin ferrochelatase family. The protein in the C-terminal section; belongs to the precorrin methyltransferase family.

It catalyses the reaction uroporphyrinogen III + 2 S-adenosyl-L-methionine = precorrin-2 + 2 S-adenosyl-L-homocysteine + H(+). The enzyme catalyses precorrin-2 + NAD(+) = sirohydrochlorin + NADH + 2 H(+). It carries out the reaction siroheme + 2 H(+) = sirohydrochlorin + Fe(2+). It participates in cofactor biosynthesis; adenosylcobalamin biosynthesis; precorrin-2 from uroporphyrinogen III: step 1/1. Its pathway is cofactor biosynthesis; adenosylcobalamin biosynthesis; sirohydrochlorin from precorrin-2: step 1/1. The protein operates within porphyrin-containing compound metabolism; siroheme biosynthesis; precorrin-2 from uroporphyrinogen III: step 1/1. It functions in the pathway porphyrin-containing compound metabolism; siroheme biosynthesis; siroheme from sirohydrochlorin: step 1/1. It participates in porphyrin-containing compound metabolism; siroheme biosynthesis; sirohydrochlorin from precorrin-2: step 1/1. In terms of biological role, multifunctional enzyme that catalyzes the SAM-dependent methylations of uroporphyrinogen III at position C-2 and C-7 to form precorrin-2 via precorrin-1. Then it catalyzes the NAD-dependent ring dehydrogenation of precorrin-2 to yield sirohydrochlorin. Finally, it catalyzes the ferrochelation of sirohydrochlorin to yield siroheme. The sequence is that of Siroheme synthase from Gluconobacter oxydans (strain 621H) (Gluconobacter suboxydans).